The chain runs to 183 residues: Adenine phosphoribosyltransferase (183 aa).

Belongs to the purine/pyrimidine phosphoribosyltransferase family. In terms of assembly, homodimer.

It localises to the cytoplasm. It carries out the reaction AMP + diphosphate = 5-phospho-alpha-D-ribose 1-diphosphate + adenine. Its pathway is purine metabolism; AMP biosynthesis via salvage pathway; AMP from adenine: step 1/1. Functionally, catalyzes a salvage reaction resulting in the formation of AMP, that is energically less costly than de novo synthesis. In Citrobacter koseri (strain ATCC BAA-895 / CDC 4225-83 / SGSC4696), this protein is Adenine phosphoribosyltransferase.